Reading from the N-terminus, the 2187-residue chain is Non-reducing polyketide synthase phnA (2187 aa).

Residues 17 to 255 (LLFGDLSLAH…KYLDIDSPYH (239 aa)) form an N-terminal acylcarrier protein transacylase domain (SAT) region. Residues 383-819 (HSKIAIVGYS…GGNTAMLIED (437 aa)) form the Ketosynthase family 3 (KS3) domain. Active-site for beta-ketoacyl synthase activity residues include C555, H690, and H735. Residues 926 to 1226 (RVAFAFTGQG…GMVKGTIDSR (301 aa)) are malonyl-CoA:ACP transacylase (MAT) domain. Catalysis depends on S1021, which acts as the For acyl/malonyl transferase activity. The interval 1321–1637 (PCAQQIVEEF…PRRALDHLLP (317 aa)) is product template (PT) domain. Positions 1324–1458 (QQIVEEFHDS…LDVVLYPGQQ (135 aa)) are N-terminal hotdog fold. The 310-residue stretch at 1324 to 1633 (QQIVEEFHDS…FQGVPRRALD (310 aa)) folds into the PKS/mFAS DH domain. H1356 (proton acceptor; for dehydratase activity) is an active-site residue. The C-terminal hotdog fold stretch occupies residues 1486–1633 (TETHLIKRGM…FQGVPRRALD (148 aa)). D1546 serves as the catalytic Proton donor; for dehydratase activity. The segment covering 1652-1669 (KAPVAAVAPPRTPTKAAP) has biased composition (low complexity). Positions 1652-1681 (KAPVAAVAPPRTPTKAAPQSRQAAPKQKRS) are disordered. Carrier domains lie at 1684-1758 (SDVF…SNSD) and 1796-1874 (SSES…YNVM). The residue at position 1718 (S1718) is an O-(pantetheine 4'-phosphoryl)serine. The interval 1754–1796 (LSNSDEDDTPSGDSSTYEDSESQITSPASSVGPETPGGGEFGS) is disordered. Over residues 1757–1774 (SDEDDTPSGDSSTYEDSE) the composition is skewed to acidic residues. The residue at position 1834 (S1834) is an O-(pantetheine 4'-phosphoryl)serine. The thioesterase (TE) domain stretch occupies residues 1906-2183 (SSLPQATSIL…PEMGEAVAEF (278 aa)). The active-site For thioesterase activity is the S2009.

The catalysed reaction is 6 malonyl-CoA + acetyl-CoA + 5 H(+) = 3,6,7,9-tetrahydroxy-3-methyl-2,3-dihydro-1H-naphtho[2,1-b]pyran-1-one + 6 CO2 + 7 CoA + H2O. Its pathway is secondary metabolite biosynthesis. Functionally, non-reducing polyketide synthase; part of the gene cluster that mediates the biosynthesis of phenalenones such as herqueinone, compounds that have been reported to treat tumors, bacterial infections and/or mycoses, and rheumatic diseases. The non-reducing polyketide synthase phnA synthesizes the heptaketide backbone and cyclizes it into the angular, hemiketal-containing naphtho-gamma-pyrone prephenalenone. The product template (PT) domain of phnA catalyzes only the C4-C9 aldol condensation, which is unprecedented among known PT domains. The transformation of prephenalenone to phenalenones requires an FAD-dependent monooxygenase phnB, which catalyzes the C2 aromatic hydroxylation of prephenalenone and ring opening of the gamma-pyrone ring simultaneously. Subsequent intramolecular deprotonation of C3 phenolic oxygen accelerates phenalenone ring closure to yield the tricyclic phenalenone core with a C2 hydroxylation. The prenyltransferase phnF further catalyzes reverse C-prenylation of phenalenone by direct electrophilic substitution at C6, or possibly via first a forward O-prenylation of a neighboring phenol in phenalenone, followed by a Claisen rearrangement. The hydroalkoxylation enzyme phnH catalyzes the 5-exo-trig cyclization via acid catalysis after the spontaneous deprotonation of 7-OH, which leads to the formation of the dihydrobenzofuran atrovenetin. Atrovenetin is further converted to deoxyherqueinone by the O-methyltransferase phnC which can methylate C2-OH to stabilize the northern portion of the phenalenone core. Finally, the oxidoreductase phnG converts deoxyherqueinone to herqueinone via C6 hydroxylation. In Penicillium herquei, this protein is Non-reducing polyketide synthase phnA.